The following is a 1754-amino-acid chain: Intraflagellar transport protein 172 homolog (1754 aa).

7 WD repeats span residues 14-53 (EQIQ…RDKF), 64-103 (KNSY…NDKK), 110-149 (PQAS…QSLY), 151-190 (GDSI…EPLG), 194-232 (QHPV…RTFD), 283-322 (ACLY…TVWQ), and 519-557 (TLLS…EHVT). TPR repeat units lie at residues 623–656 (KAMW…SKAY), 690–723 (GSDL…DEAV), 748–781 (SEQQ…ARAA), 807–840 (SELY…ARAL), 852–885 (TALE…QKAL), 1041–1074 (RGKL…EDGY), 1140–1166 (DEVH…FLKA), 1167–1199 (NKPR…AVGE), 1211–1250 (TSNY…AEEH), 1282–1315 (SRSY…NAED), and 1698–1733 (FPVR…SPGS).

This sequence belongs to the IFT172 family.

It is found in the cell projection. It localises to the cilium. Its function is as follows. Required for the maintenance and formation of cilia. The chain is Intraflagellar transport protein 172 homolog from Drosophila melanogaster (Fruit fly).